The following is a 620-amino-acid chain: tRNA uridine 5-carboxymethylaminomethyl modification enzyme MnmG (620 aa).

FAD-binding positions include 13–18, Val125, and Ser182; that span reads GGGHAG. 280 to 294 is a binding site for NAD(+); the sequence is GPRYCPSVEDKIVKF. FAD is bound at residue Asn377.

It belongs to the MnmG family. In terms of assembly, homodimer. Heterotetramer of two MnmE and two MnmG subunits. FAD is required as a cofactor.

The protein resides in the cytoplasm. NAD-binding protein involved in the addition of a carboxymethylaminomethyl (cmnm) group at the wobble position (U34) of certain tRNAs, forming tRNA-cmnm(5)s(2)U34. This chain is tRNA uridine 5-carboxymethylaminomethyl modification enzyme MnmG, found in Sulfurihydrogenibium sp. (strain YO3AOP1).